A 746-amino-acid polypeptide reads, in one-letter code: UvrABC system protein C (746 aa).

The 80-residue stretch at alanine 18–valine 97 folds into the GIY-YIG domain. The UVR domain occupies arginine 211–valine 246. The disordered stretch occupies residues alanine 557 to proline 577.

Belongs to the UvrC family. As to quaternary structure, interacts with UvrB in an incision complex.

It localises to the cytoplasm. The UvrABC repair system catalyzes the recognition and processing of DNA lesions. UvrC both incises the 5' and 3' sides of the lesion. The N-terminal half is responsible for the 3' incision and the C-terminal half is responsible for the 5' incision. This is UvrABC system protein C from Bifidobacterium longum (strain DJO10A).